We begin with the raw amino-acid sequence, 445 residues long: MGKLIELLLHPSELSAAIHYKLWRQPLHPRDLSKESTELRRCYELLDVCSRSFAAVIRELHPEVRDAVMLFYLILRALDTIEDDMTLSRDIKIPILRDFTKCMKTPGWKFTDSDPNERDRVVLQEFPVVMTEFNKLKPKYQEVIYDITDRMGNGMADYVIDDDFNNNGVDTIAAYDLYCHHVAGIVGEGLTRITILAGFGTDVLHENPRLQESMGLFLQKVNIIRDYREDIDVNRAFWPREIWHKYAEEMRDFKDPKYSKKALHCTSDLVANALGHATDCLDYLDNVTDPSTFTFCAIPQVMAIATLDLVYRNPDVFQKNVKLRKGTTVSLILEASNVSGVCDIFTRYARKVYKKSDPNDPNYFRVSVLCGKIEQHAALIKRQRGPPAKTIAQLEGERKEMALSLIVCLAVIFSMSGLMAYIAYVSGFRWSPREIFDSKMFPLRD.

The next 2 helical transmembrane spans lie at 291-311 and 405-425; these read STFTFCAIPQVMAIATLDLVY and LIVCLAVIFSMSGLMAYIAYV.

This sequence belongs to the phytoene/squalene synthase family. Mg(2+) serves as cofactor.

The protein localises to the endoplasmic reticulum membrane. The catalysed reaction is 2 (2E,6E)-farnesyl diphosphate + NADPH + H(+) = squalene + 2 diphosphate + NADP(+). It carries out the reaction 2 (2E,6E)-farnesyl diphosphate + NADH + H(+) = squalene + 2 diphosphate + NAD(+). It participates in terpene metabolism; lanosterol biosynthesis; lanosterol from farnesyl diphosphate: step 1/3. Its function is as follows. Catalyzes the condensation of 2 two farnesyl pyrophosphate moieties to form squalene. It is the first committed enzyme of the sterol biosynthesis pathway. Required for the biosynthesis of ergosterol. This chain is Squalene synthase (SQS1), found in Yarrowia lipolytica (strain CLIB 122 / E 150) (Yeast).